A 161-amino-acid polypeptide reads, in one-letter code: Dermonecrotic toxin LarSicTox-alphaI-1 (161 aa).

The protein belongs to the arthropod phospholipase D family. Class II subfamily. Requires Mg(2+) as cofactor. Post-translationally, contains 2 disulfide bonds. As to expression, expressed by the venom gland.

It localises to the secreted. It catalyses the reaction an N-(acyl)-sphingosylphosphocholine = an N-(acyl)-sphingosyl-1,3-cyclic phosphate + choline. The enzyme catalyses an N-(acyl)-sphingosylphosphoethanolamine = an N-(acyl)-sphingosyl-1,3-cyclic phosphate + ethanolamine. The catalysed reaction is a 1-acyl-sn-glycero-3-phosphocholine = a 1-acyl-sn-glycero-2,3-cyclic phosphate + choline. It carries out the reaction a 1-acyl-sn-glycero-3-phosphoethanolamine = a 1-acyl-sn-glycero-2,3-cyclic phosphate + ethanolamine. Functionally, dermonecrotic toxins cleave the phosphodiester linkage between the phosphate and headgroup of certain phospholipids (sphingolipid and lysolipid substrates), forming an alcohol (often choline) and a cyclic phosphate. This toxin acts on sphingomyelin (SM). It may also act on ceramide phosphoethanolamine (CPE), lysophosphatidylcholine (LPC) and lysophosphatidylethanolamine (LPE), but not on lysophosphatidylserine (LPS), and lysophosphatidylglycerol (LPG). It acts by transphosphatidylation, releasing exclusively cyclic phosphate products as second products. Induces dermonecrosis, hemolysis, increased vascular permeability, edema, inflammatory response, and platelet aggregation. The polypeptide is Dermonecrotic toxin LarSicTox-alphaI-1 (Loxosceles arizonica (Arizona brown spider)).